The sequence spans 734 residues: Photosystem I P700 chlorophyll a apoprotein A2 (734 aa).

Helical transmembrane passes span 46–69, 135–158, 175–199, 273–291, 330–353, 369–395, 417–439, and 517–535; these read IFASHFGQLAIIFLWTSGNLFHVA, LYTGALFLLFLSAISLIAGWLHLQ, LNHHLSGLFGVSSLAWTGHLVHVAI, IAHHHLAIAFVFLVAGHMY, IHFQLGLALASLGVITSLVAQHMY, AALYTHHQYIAGFIMTGAFAHGAIFFI, AIKSHLSWASLFLGFHTLGLYVH, and FLVHHAIALGLHTTTLILV. The [4Fe-4S] cluster site is built by Cys-559 and Cys-568. 2 helical membrane-spanning segments follow: residues 575-596 and 643-665; these read AFYLAVFWMLNTIGWVTFYWHW and LSVWAWMFLFGHLVWATGFMFLI. Chlorophyll a is bound by residues His-654, Met-662, and Tyr-670. Trp-671 provides a ligand contact to phylloquinone. A helical transmembrane segment spans residues 707–727; the sequence is LVGLAHFSVGYIFTYAAFLIA.

Belongs to the PsaA/PsaB family. The PsaA/B heterodimer binds the P700 chlorophyll special pair and subsequent electron acceptors. PSI consists of a core antenna complex that captures photons, and an electron transfer chain that converts photonic excitation into a charge separation. The eukaryotic PSI reaction center is composed of at least 11 subunits. It depends on P700 is a chlorophyll a/chlorophyll a' dimer, A0 is one or more chlorophyll a, A1 is one or both phylloquinones and FX is a shared 4Fe-4S iron-sulfur center. as a cofactor.

Its subcellular location is the plastid. The protein resides in the chloroplast thylakoid membrane. The catalysed reaction is reduced [plastocyanin] + hnu + oxidized [2Fe-2S]-[ferredoxin] = oxidized [plastocyanin] + reduced [2Fe-2S]-[ferredoxin]. PsaA and PsaB bind P700, the primary electron donor of photosystem I (PSI), as well as the electron acceptors A0, A1 and FX. PSI is a plastocyanin-ferredoxin oxidoreductase, converting photonic excitation into a charge separation, which transfers an electron from the donor P700 chlorophyll pair to the spectroscopically characterized acceptors A0, A1, FX, FA and FB in turn. Oxidized P700 is reduced on the lumenal side of the thylakoid membrane by plastocyanin. In Amborella trichopoda, this protein is Photosystem I P700 chlorophyll a apoprotein A2.